Here is an 880-residue protein sequence, read N- to C-terminus: Chaperone protein ClpB 1 (880 aa).

Positions 6–148 constitute a Clp R domain; that stretch reads PNKFTDKAWE…EASIKAVRGS (143 aa). 2 repeat regions span residues 9–74 and 85–148; these read FTDK…TQRQ and LGRS…VRGS. Residues 161–343 are NBD1; that stretch reads EALQKFGRDL…RRFQQVYVDQ (183 aa). 208–215 contributes to the ATP binding site; the sequence is GEPGVGKT. Positions 344–554 are linker; the sequence is PSVENTISIL…IAEIVAKWTG (211 aa). A coiled-coil region spans residues 394–530; it reads IDLVDEAAAQ…KEAKLLELQS (137 aa). The tract at residues 564 to 775 is NBD2; that stretch reads ERQKLLQLES…RVDDTILFHA (212 aa). 614–621 is a binding site for ATP; it reads GPTGVGKT. Residues 776-880 are C-terminal; it reads LSRSEMSHII…VKVSVTQITT (105 aa).

It belongs to the ClpA/ClpB family. As to quaternary structure, homohexamer. The oligomerization is ATP-dependent.

The protein localises to the cytoplasm. In terms of biological role, part of a stress-induced multi-chaperone system, it is involved in the recovery of the cell from heat-induced damage, in cooperation with DnaK, DnaJ and GrpE. Acts before DnaK, in the processing of protein aggregates. Protein binding stimulates the ATPase activity; ATP hydrolysis unfolds the denatured protein aggregates, which probably helps expose new hydrophobic binding sites on the surface of ClpB-bound aggregates, contributing to the solubilization and refolding of denatured protein aggregates by DnaK. The polypeptide is Chaperone protein ClpB 1 (clpB1) (Nostoc sp. (strain PCC 7120 / SAG 25.82 / UTEX 2576)).